A 201-amino-acid polypeptide reads, in one-letter code: FMN-dependent NADH:quinone oxidoreductase (201 aa).

FMN is bound by residues serine 10, 16-18, 96-99, and 140-143; these read SQS, MYNF, and SRGG.

The protein belongs to the azoreductase type 1 family. Homodimer. Requires FMN as cofactor.

The catalysed reaction is 2 a quinone + NADH + H(+) = 2 a 1,4-benzosemiquinone + NAD(+). It carries out the reaction N,N-dimethyl-1,4-phenylenediamine + anthranilate + 2 NAD(+) = 2-(4-dimethylaminophenyl)diazenylbenzoate + 2 NADH + 2 H(+). Quinone reductase that provides resistance to thiol-specific stress caused by electrophilic quinones. Functionally, also exhibits azoreductase activity. Catalyzes the reductive cleavage of the azo bond in aromatic azo compounds to the corresponding amines. This is FMN-dependent NADH:quinone oxidoreductase from Citrobacter koseri (strain ATCC BAA-895 / CDC 4225-83 / SGSC4696).